The primary structure comprises 446 residues: Mannosyltransferase KTR6 (446 aa).

The Cytoplasmic segment spans residues 1–8 (MHVLLSKK). The chain crosses the membrane as a helical; Signal-anchor for type II membrane protein span at residues 9-29 (IARFLLISFVFVLALMVTINH). The tract at residues 30-114 (PKTKQMSEQY…MVPSYINHRG (85 aa)) is stem region. The Lumenal portion of the chain corresponds to 30-446 (PKTKQMSEQY…DKPEGWDRLP (417 aa)). Asn82 and Asn98 each carry an N-linked (GlcNAc...) asparagine glycan. The tract at residues 115–446 (SPPKACFVSL…DKPEGWDRLP (332 aa)) is catalytic. Catalysis depends on Glu334, which acts as the Nucleophile.

This sequence belongs to the glycosyltransferase 15 family.

Its subcellular location is the membrane. It participates in protein modification; protein glycosylation. Functionally, glycosyltransferase that transfers an alpha-D-mannosyl residue from GDP-mannose into lipid-linked oligosaccharide, forming an alpha-(1-&gt;2)-D-mannosyl-D-mannose linkage. Required for addition of mannosylphosphate in yeast mannan. Recognizes any oligosaccharides with at least one alpha-1,2-linked mannobiose unit. The sequence is that of Mannosyltransferase KTR6 (KTR6) from Saccharomyces cerevisiae (strain ATCC 204508 / S288c) (Baker's yeast).